Here is an 862-residue protein sequence, read N- to C-terminus: Ecdysone-induced protein 78C (862 aa).

Disordered regions lie at residues 28 to 83 (SSEQ…EEAL), 97 to 138 (LHFF…KQHH), 173 to 210 (ASLSPQQQQQRQHTHQQQQQQQQQQQHPGQQQHQLNCT), and 230 to 353 (ASNH…NNNN). Residues 37 to 46 (KQEDLIKDFT) show a composition bias toward basic and acidic residues. Positions 47 to 82 (RDEEEQPSEEEAEEEDNEEDEEEEGEEEEEDEDEEA) are enriched in acidic residues. A compositionally biased stretch (polar residues) spans 105 to 119 (DSSTQGAYSEANSLE). Composition is skewed to low complexity over residues 173 to 206 (ASLSPQQQQQRQHTHQQQQQQQQQQQHPGQQQHQ), 230 to 291 (ASNH…NNSV), 308 to 335 (QQQQPLPTTQLQQQQQHQQQLQHPQQQQ), and 342 to 353 (SSSSNGSSNNNN). A DNA-binding region (nuclear receptor) is located at residues 360–435 (FVPCKVCGDK…AGMSRDSVRY (76 aa)). 2 consecutive NR C4-type zinc fingers follow at residues 363–383 (CKVCGDKASGYHYGVTSCEGC) and 399–418 (CLRDGKCLVIRLNRNRCQYC). The disordered stretch occupies residues 444 to 557 (ELNGAAASSA…NNNSSSGNAS (114 aa)). Low complexity predominate over residues 447 to 460 (GAAASSAAAGAPAS). Residues 463–472 (VDDSTSSTLH) are compositionally biased toward polar residues. The span at 475 to 508 (HLQQQQQQHLLQQQQQQQHQPQLQQHHQLQQQPH) shows a compositional bias: low complexity. Positions 516–533 (TPSTPQTPQMCSIASSPS) are enriched in polar residues. Over residues 539–555 (NSANNNNNNNNNSSSGN) the composition is skewed to low complexity. In terms of domain architecture, NR LBD spans 626-855 (YTEELTRELM…PPLFAEIFDI (230 aa)).

The protein belongs to the nuclear hormone receptor family. NR1 subfamily.

The protein localises to the nucleus. Induces the early late puff 78C which triggers puparium formation and development. The polypeptide is Ecdysone-induced protein 78C (Eip78C) (Drosophila melanogaster (Fruit fly)).